Reading from the N-terminus, the 807-residue chain is MTYDHRAVEQKWQAYWQSHKSFKTTEDKDKKNFYALDMFPYPSGQGLHVGHPEGYTATDILARMKRMQGFNVLHPMGWDAFGLPAEQYALDTGNNPADFTQKNINTFKRQINSLGFSYDWDREVNTTDPDFYKWTQWIFEKMYEKGLAYEAEVAVNWSPDLGTVVANEEVIDGKTERGGYPVYRKPMRQWMLKITAYADRLIDDLDLVDWPESVKDMQRNWIGRSKGAEVSFAVENHDANIDVFTTRADTMFGVSYIVMAPEHKLVADITTPEQKAAVDAYLKEIEHKSDLERTDLAKDKTGAFTGAYAINPVNGERLPIWISDYVLASYGTGAVMAVPAHDPRDWEFAKKFGLPLKPVVSGGNPEEAVHTEPGVMINSDFLDGLDKQAAIDKMIPWLVEHKVGHEQISYKLRDWLFSRQRYWGEPIPIIHWEDGTTSVVPEDQLPLELPLTSDIKPSGTGESPLANLTDWLNVTDENGRKGRRETNTMPQWAGSSWYYLRYIDPKNPDKLADFDKLKDWLPVDMYIGGAEHAVLHLLYVRFWHKFLYDIGVVPTKEPFQHLYNQGMILGDNHEKMSKSKGNVVNPDDVVDRFGADTLRLYEMFMGPLDASISWSEKGLAGARKFLDRVWRLYTEEDTDENDQLSSKIVADNNDQLKKVYNETVKKVTEDFESMHFNVAISQLMVFINDAYKADTFPREYAEGFVKLLAPIAPHMMEELWAMLGHDDSISYVDWPTFDPAALIANEVEVIFQVNGKLKAKVTVAKDTPKEELEAMAKANEKVAEFIADKTVRKVIAIPNKLVNIVAN.

The short motif at 40–51 is the 'HIGH' region element; that stretch reads PYPSGQGLHVGH. Residues 575–579 carry the 'KMSKS' region motif; that stretch reads KMSKS. Lys578 provides a ligand contact to ATP.

Belongs to the class-I aminoacyl-tRNA synthetase family.

The protein localises to the cytoplasm. It carries out the reaction tRNA(Leu) + L-leucine + ATP = L-leucyl-tRNA(Leu) + AMP + diphosphate. In Latilactobacillus sakei subsp. sakei (strain 23K) (Lactobacillus sakei subsp. sakei), this protein is Leucine--tRNA ligase.